The sequence spans 477 residues: MGAYTHVDFHESRLLKDKQDYLSFKSADEAPPDPPGYVRPDSYVRAYLIQRADFPNTQSLSVTLSIASNKLASGLMGSDAVSSSFMLMNDVGDYFECGVCHNKPYLGREVIFCRKYIGGRGVEITTGKNYTSNNWNEASYVIQVNVVDGLAQTTVNSTYTQTDVSGLPKNWTRIYKITKIVSVDQNLYPGCFSDSKLGVMRIRSLLVSPVRIFFRDILLKPLKKSFNARIEDVLNIDDTSLLVPSPVVPESTGGVGPSEQLDVVALTSDVTELINTRGQGKICFPDSVLSINEADIYDERYLPITEALQINARLRRLVLSKGGSQTPRDMGNMIVAMIQLFVLYSTVKNISVKDGYRVETELGQKRVYLSYSEVREAILGGKYGASPTNTVRSFMRYFAHTTITLLIEKKIQPACTALAKHGVPKRFTPYCFDFALLDNRYYPADVLKANAMACAIAIKSANLRRKGSETYNILESI.

It belongs to the closteroviridae minor capsid protein family.

It localises to the virion. In terms of biological role, minor capsid protein that encapsidates the 5'-terminal portion of the viral genome. The polypeptide is Minor capsid protein (Vitis vinifera (Grape)).